The following is a 259-amino-acid chain: MGQRIDVNHENIYYGDFLAVEDVNINIEPNKVTAFIGPSGCGKSTVLRTLDRMHEIIPGAHVEGEVLLEGKNLYDKDVDPVAVRRDVGMVFQRPNPFPTMSIRENVLAGVRLNNHHLAKSDADDLVEWALRGANLWEEVKDRLDNPGIGLSGGQQQRLCIARAVAVHPQVLLMDEPCSALDPISTLAVEDLINELKSDYTIVIVTHNMQQAARIADYTAFFNLKAVGQPGHLEYFADTITMFNNPQNEEAERYISGRFG.

The region spanning 2–248 is the ABC transporter domain; the sequence is GQRIDVNHEN…ITMFNNPQNE (247 aa). 37 to 44 contacts ATP; the sequence is GPSGCGKS.

The protein belongs to the ABC transporter superfamily. Phosphate importer (TC 3.A.1.7) family. As to quaternary structure, the complex is composed of two ATP-binding proteins (PstB), two transmembrane proteins (PstC and PstA) and a solute-binding protein (PstS).

It is found in the cell membrane. It carries out the reaction phosphate(out) + ATP + H2O = ADP + 2 phosphate(in) + H(+). In terms of biological role, part of the ABC transporter complex PstSACB involved in phosphate import. Responsible for energy coupling to the transport system. In Bifidobacterium longum (strain NCC 2705), this protein is Phosphate import ATP-binding protein PstB.